The primary structure comprises 243 residues: Small ribosomal subunit protein uS3 (243 aa).

A KH type-2 domain is found at 39–110; the sequence is IRTFIQKKYG…QVRINVVEVE (72 aa). Positions 216–243 are disordered; it reads KTIPVGASPKRKAGRRPQQFEDRSNENS. Residues 233-243 are compositionally biased toward basic and acidic residues; it reads QQFEDRSNENS.

This sequence belongs to the universal ribosomal protein uS3 family. In terms of assembly, part of the 30S ribosomal subunit. Forms a tight complex with proteins S10 and S14.

Binds the lower part of the 30S subunit head. Binds mRNA in the 70S ribosome, positioning it for translation. The polypeptide is Small ribosomal subunit protein uS3 (Prochlorococcus marinus (strain MIT 9312)).